The primary structure comprises 302 residues: Catechol 1,2-dioxygenase (302 aa).

Fe cation is bound by residues Y164, Y198, H222, and H224.

This sequence belongs to the intradiol ring-cleavage dioxygenase family. It depends on Fe(3+) as a cofactor.

The enzyme catalyses catechol + O2 = cis,cis-muconate + 2 H(+). The protein operates within aromatic compound metabolism; beta-ketoadipate pathway; 5-oxo-4,5-dihydro-2-furylacetate from catechol: step 1/3. This Pseudomonas sp. (strain EST1001) protein is Catechol 1,2-dioxygenase (pheB).